The following is a 295-amino-acid chain: Zinc finger CCCH domain-containing protein 44 (295 aa).

Positions 1-31 (MEAGGGKRAAPEGTNGAAKRARASESSQVGV) are disordered. 2 C3H1-type zinc fingers span residues 32–60 (GSKLKPCTKFFSTSGCPFGSSCHFLHNFP) and 98–126 (SVKTRMCNKYNTAEGCKWGSKCHFAHGER). One can recognise a KH domain in the interval 166–230 (SATAKISVDA…DQIKHASAMV (65 aa)). The segment at 259–286 (NFKTKLCENFNKGSCTFGDRCHFAHGES) adopts a C3H1-type 3 zinc-finger fold.

This Oryza sativa subsp. japonica (Rice) protein is Zinc finger CCCH domain-containing protein 44.